A 206-amino-acid chain; its full sequence is Dephospho-CoA kinase (206 aa).

Residues 4 to 204 form the DPCK domain; that stretch reads IVGLTGGIGS…QFYLQQAENK (201 aa). 12 to 17 contacts ATP; that stretch reads GSGKTT.

It belongs to the CoaE family.

It is found in the cytoplasm. It carries out the reaction 3'-dephospho-CoA + ATP = ADP + CoA + H(+). Its pathway is cofactor biosynthesis; coenzyme A biosynthesis; CoA from (R)-pantothenate: step 5/5. Functionally, catalyzes the phosphorylation of the 3'-hydroxyl group of dephosphocoenzyme A to form coenzyme A. This is Dephospho-CoA kinase from Haemophilus influenzae (strain 86-028NP).